Here is a 290-residue protein sequence, read N- to C-terminus: Cilia- and flagella-associated protein 298 (290 aa).

The protein belongs to the CFAP298 family. As to quaternary structure, interacts with ZMYND10.

The protein resides in the cytoplasm. Its subcellular location is the cytoskeleton. It localises to the cilium basal body. In terms of biological role, plays a role in motile cilium function, possibly by acting on outer dynein arm assembly. Seems to be important for initiation rather than maintenance of cilium motility. Required for correct positioning of cilia at the apical cell surface, suggesting an additional role in the planar cell polarity (PCP) pathway. May suppress canonical Wnt signaling activity. The polypeptide is Cilia- and flagella-associated protein 298 (Mus musculus (Mouse)).